The primary structure comprises 304 residues: Oxidoreductase calM (304 aa).

Residues Ile-26, Thr-45, Asp-68, and Asn-98 each contribute to the NADP(+) site. The Proton donor role is filled by Ser-152. The NADP(+) site is built by Tyr-166, Lys-170, Val-200, and Thr-202. Tyr-166 serves as the catalytic Proton acceptor. The active-site Lowers pKa of active site Tyr is Lys-170.

This sequence belongs to the short-chain dehydrogenases/reductases (SDR) family.

It participates in secondary metabolite biosynthesis. Oxidoreductase; part of the gene cluster that mediates the biosynthesis of calbistrin A and related compounds. Calbistrin A is a secondary metabolite with an interesting structure that was recently found to have bioactivity against leukemia cells. It consists of two polyketides linked by an ester bond: a bicyclic decalin containing polyketide and a linear 12 carbon dioic acid structure. The polyketide synthase calA is probably responsible for forming the decalin moiety. Because calA lacks a designated enoylreductase (ER) domain, the required activity is provided by the trans-enoyl reductase calK. Following release from the PKS, calF then probably catalyzes the oxidation and the subsequent Diels Alder cycloisomerization that lead to the formation of the decalin moiety. The decalin polyketide backbone includes two C-methyl groups, at C7 and C11 in backbone, of which the C7 position is probably methylated by the methyltransferase domain of calA. A candidate for adding the methyl group at C11, if not done by CalA, is the cluster methyltransferase calH. Several additional tailoring enzymes within the cluster could be involved in the modification of the decalin polyketide product. Those include the 3 cytochrome P450 monooxygenases CalE, CalG and CalL, of which one might be responsible for the introduction of the extra hydroxyl group attached to the backbone of the decalin moiety, at position C9 in the backbone, that allows for attachment of the linear moiety. One tailoring enzyme activity that is expected to be involved in biosynthesis of calbistrin is an acyltransferase for connecting the two polyketide synthase products, and which could be performed by the cluster acyltransferase calJ. The enzyme responsible for the biosynthesis of the linear moiety, probably a second PKS, has not been identified yet. This Penicillium decumbens protein is Oxidoreductase calM.